The primary structure comprises 894 residues: CWF19-like protein 2 (894 aa).

A disordered region spans residues 1–147; it reads MATSMAAASG…DEKSGKDDTQ (147 aa). A compositionally biased stretch (basic and acidic residues) spans 13–56; that stretch reads ESAKSIEERKEQTRNARAEVLRQAKANFEKEERRKELKRLRGED. A coiled-coil region spans residues 13-107; that stretch reads ESAKSIEERK…KKQKYEKNNE (95 aa). Ser-75 is modified (phosphoserine). The segment covering 76–99 has biased composition (basic residues); it reads VKKKKKKDKHSKKAKKEKKKKSKK. A compositionally biased stretch (basic and acidic residues) spans 128 to 147; that stretch reads PDKEKAWKVKDEKSGKDDTQ. The stretch at 166-281 forms a coiled coil; it reads SSSSLKAEKE…AEKAASTKED (116 aa). Residue Lys-171 forms a Glycyl lysine isopeptide (Lys-Gly) (interchain with G-Cter in SUMO2) linkage. The span at 270–284 shows a compositional bias: basic and acidic residues; sequence EDAEKAASTKEDYRR. A disordered region spans residues 270–483; that stretch reads EDAEKAASTK…STFAGSPERE (214 aa). The segment covering 320–330 has biased composition (polar residues); that stretch reads TTDTAKNSNNE. Basic and acidic residues predominate over residues 332 to 352; that stretch reads FIGDEKDKRPGSLETCRRESN. Phosphoserine is present on residues Ser-360 and Ser-372. 2 stretches are compositionally biased toward basic and acidic residues: residues 410–430 and 440–473; these read KNSE…DKKH and TDEH…RDTK. Phosphoserine is present on residues Ser-479 and Ser-484. Residues 502–530 are a coiled coil; it reads KAEMMGNMELAEQLKVQLEKANKFKETIT. The segment at 561–583 is disordered; it reads NTPGKSLESQGGRRKRQMVSTHE. Lys-604 is covalently cross-linked (Glycyl lysine isopeptide (Lys-Gly) (interchain with G-Cter in SUMO2)). A coiled-coil region spans residues 644–675; that stretch reads AAERERLGEEEENQRKKAIAEHRSLAAQMEKC.

This sequence belongs to the CWF19 family.

The polypeptide is CWF19-like protein 2 (CWF19L2) (Homo sapiens (Human)).